The sequence spans 449 residues: UDP-N-acetylmuramoylalanine--D-glutamate ligase (449 aa).

An ATP-binding site is contributed by 118-124; it reads GTNGKTT.

The protein belongs to the MurCDEF family.

It is found in the cytoplasm. The catalysed reaction is UDP-N-acetyl-alpha-D-muramoyl-L-alanine + D-glutamate + ATP = UDP-N-acetyl-alpha-D-muramoyl-L-alanyl-D-glutamate + ADP + phosphate + H(+). The protein operates within cell wall biogenesis; peptidoglycan biosynthesis. Functionally, cell wall formation. Catalyzes the addition of glutamate to the nucleotide precursor UDP-N-acetylmuramoyl-L-alanine (UMA). The protein is UDP-N-acetylmuramoylalanine--D-glutamate ligase of Staphylococcus aureus (strain MRSA252).